A 420-amino-acid chain; its full sequence is Putative RNA-binding protein Alsin2 (420 aa).

Positions 99 to 130 (IADCDRRTDSAKQRLKETQEELTAEVAEKANA) form a coiled coil. 3 stretches are compositionally biased toward basic and acidic residues: residues 242-259 (AELK…EGRG), 282-363 (RERQ…RFGD), and 373-399 (HHRD…HFRD). The interval 242–420 (AELKRTGKMT…SYSRERNYRR (179 aa)) is disordered.

The protein belongs to the Luc7 family. Interacts with x16 (via Arg/Ser-rich region).

In terms of biological role, may bind to RNA via its Arg/Ser-rich domain. The sequence is that of Putative RNA-binding protein Alsin2 from Drosophila melanogaster (Fruit fly).